The chain runs to 317 residues: Melanocyte-stimulating hormone receptor (317 aa).

A disordered region spans residues 1–28; that stretch reads MPMQGAQGRLRGSLNATPPTTPHSGLAG. Topologically, residues 1-37 are extracellular; sequence MPMQGAQGRLRGSLNATPPTTPHSGLAGNQTGPWCLE. An N-linked (GlcNAc...) asparagine glycan is attached at N29. A helical membrane pass occupies residues 38–63; that stretch reads VSIPDELFLSLGLVSLVENMLVVAAI. Residues 64–72 are Cytoplasmic-facing; the sequence is AKNRNLHSP. A helical membrane pass occupies residues 73-93; sequence MYYFICCLAVSDLLVSVSNVL. The Extracellular segment spans residues 94-118; that stretch reads ETAVMLLLEAGVLAAWAGVVQQLDN. Residues 119–140 form a helical membrane-spanning segment; sequence AIDVFICGSMVSSLCFLGAIAV. Residues 141–163 lie on the Cytoplasmic side of the membrane; sequence DRYITIFYALRYHSIVTLPRARW. Residues 164-183 form a helical membrane-spanning segment; it reads AIATIWAASVVCSTLFIAYY. The Extracellular segment spans residues 184 to 191; the sequence is DCTAVLLC. Residues 192-211 traverse the membrane as a helical segment; that stretch reads LVSFFLALVVLMAVLYMHML. At 212–240 the chain is on the cytoplasmic side; the sequence is ARACLHARSIARLHKRWRPVHQGLGLKGA. A helical transmembrane segment spans residues 241-266; the sequence is ATLSILLGSFFLCWGPFFLHLTLIVL. Topologically, residues 267-279 are extracellular; that stretch reads CPQHPTCSCVFKN. The helical transmembrane segment at 280–300 threads the bilayer; that stretch reads FKLFLTLIICNSIVDPLIYAF. Residues 301 to 317 are Cytoplasmic-facing; that stretch reads RSQELRKTLKEVLLCSW. C315 carries S-palmitoyl cysteine lipidation.

Belongs to the G-protein coupled receptor 1 family. As to quaternary structure, interacts with MGRN1, but does not undergo MGRN1-mediated ubiquitination; this interaction competes with GNAS-binding and thus inhibits agonist-induced cAMP production. Interacts with OPN3; the interaction results in a decrease in MC1R-mediated cAMP signaling and ultimately a decrease in melanin production in melanocytes.

The protein resides in the cell membrane. Functionally, receptor for MSH (alpha, beta and gamma) and ACTH. The activity of this receptor is mediated by G proteins which activate adenylate cyclase. Mediates melanogenesis, the production of eumelanin (black/brown) and phaeomelanin (red/yellow), via regulation of cAMP signaling in melanocytes. This chain is Melanocyte-stimulating hormone receptor (MC1R), found in Mammuthus primigenius (Siberian woolly mammoth).